A 1220-amino-acid polypeptide reads, in one-letter code: Formin-F (1220 aa).

The segment covering 1–10 (MNRIFGRKKK) has biased composition (basic residues). The disordered stretch occupies residues 1 to 62 (MNRIFGRKKK…TNSKSADKFD (62 aa)). Positions 6–373 (GRKKKDKDSD…QISVNKPMIG (368 aa)) constitute a GBD/FH3 domain. Basic and acidic residues predominate over residues 11-20 (DKDSDEKGST). Residues 41–56 (AYSSLQPDGNNSTNSK) are compositionally biased toward polar residues. Residues 392 to 428 (VALQSEFQKNIEELAKVKDQLKKANFDLNIANQELSS) are a coiled coil. Disordered regions lie at residues 461–659 (IDSN…KFTV), 711–732 (SQKK…GTVS), and 1049–1192 (DEAK…KKDI). Low complexity-rich tracts occupy residues 501-518 (SKPP…SSSQ) and 525-554 (SNLS…PQQQ). One can recognise an FH1 domain in the interval 532–655 (SDSLSNDFKS…NSNKPPANAP (124 aa)). Residues 555 to 564 (NIESTLTPEP) show a composition bias toward polar residues. The segment covering 575-638 (TTPPPAPPAP…GKGGPPPPPG (64 aa)) has biased composition (pro residues). In terms of domain architecture, FH2 spans 656–1054 (KFTVSKPTTK…AIKRDEAKAK (399 aa)). The segment covering 711–722 (SQKKLEASDKKS) has biased composition (basic and acidic residues). Residues 1032 to 1062 (YKDFQRDKEAAERAIKRDEAKAKKAQQLKRM) adopt a coiled-coil conformation. A compositionally biased stretch (polar residues) spans 1066–1083 (IASSTNNKNPLASSSTSV). Residues 1083 to 1158 (VGDGGMVEDI…TPSKSGSRRE (76 aa)) form the DAD domain. Residues 1117-1142 (DSSSITTISEQSENSNTSSITITTPS) are compositionally biased toward low complexity. Residues 1161-1192 (TSKSSDKDKEKEKEKEKQCESTESEDINKKDI) are compositionally biased toward basic and acidic residues.

The protein belongs to the formin homology family. Diaphanous subfamily. As to quaternary structure, interacts (via GBD/FH3 domain) with activated Rho-GTPases.

Its function is as follows. Formins play an important role in the nucleation of actin and the formation of linear actin filaments. This Dictyostelium discoideum (Social amoeba) protein is Formin-F (forF).